The chain runs to 106 residues: MRGNIAQLMQQAQKMQENLQRAQEELAKLEVTGTAGGGMVNVTLTGAKECRKVRIDPSILSDQEMAEDLIAAAFNDASNKIDAESKDRMGSATAGMQLPPGMKLPF.

Residues 80-89 (KIDAESKDRM) show a composition bias toward basic and acidic residues. Positions 80-106 (KIDAESKDRMGSATAGMQLPPGMKLPF) are disordered.

The protein belongs to the YbaB/EbfC family. As to quaternary structure, homodimer.

It is found in the cytoplasm. The protein localises to the nucleoid. In terms of biological role, binds to DNA and alters its conformation. May be involved in regulation of gene expression, nucleoid organization and DNA protection. This is Nucleoid-associated protein XOO1065 from Xanthomonas oryzae pv. oryzae (strain KACC10331 / KXO85).